We begin with the raw amino-acid sequence, 440 residues long: C4-dicarboxylate transport protein (440 aa).

Helical transmembrane passes span 8–28 (LYLQVLLAVVLGALVGHLFPA), 40–60 (FIKLVKMLIAPIVFATVVTGI), 74–94 (LKGLLYFEVLTTVALAIGLVV), 147–167 (GDILQVLLFSVLFGAALAALK), 187–207 (IVGFVMRLAPVGAFGAMAFTV), 221–241 (LIACFYATSALFVVLMLGLVL), 288–308 (VVGLVVPMGYSFNLDGTSIYL), and 354–374 (AATLSAVGNIPVAGLALLLGV). The disordered stretch occupies residues 419–440 (EEVEPANEPEPPAIPAGAGLHG).

The protein belongs to the dicarboxylate/amino acid:cation symporter (DAACS) (TC 2.A.23) family.

It localises to the cell inner membrane. Responsible for the transport of dicarboxylates such as succinate, fumarate, and malate from the periplasm across the membrane. The sequence is that of C4-dicarboxylate transport protein from Anaeromyxobacter sp. (strain K).